Reading from the N-terminus, the 255-residue chain is MDVEVKKENQNTQLKDHEVKELIKNSQNGDQKARDLLIEKNMRLVWSVVQRFLNRGYEPDDLFQIGCIGLLKSVDKFDLSYDVRFSTYAVPMIIGEIQRFIRDDGTVKVSRSLKELGNKIRRAKEELSKSNGRIPTVQEIADYLEISSEEVVMAQEAVRSPSSIHETVYENDGDPITLLDQIADQSEEKWFDKIALKEAIKDLDEREKLIVYLRYYKDKTQSEVADRLGISQVQVSRLEKKILKQIKNQMDHFES.

A Polymerase core binding motif is present at residues 61–74 (DLFQIGCIGLLKSV). Positions 221-240 (QSEVADRLGISQVQVSRLEK) form a DNA-binding region, H-T-H motif.

The protein belongs to the sigma-70 factor family.

Functionally, sigma factors are initiation factors that promote the attachment of RNA polymerase to specific initiation sites and are then released. This sigma factor is responsible for the expression of sporulation specific genes. The sequence is that of RNA polymerase sigma-F factor (sigF) from Bacillus licheniformis.